A 105-amino-acid polypeptide reads, in one-letter code: Small cysteine and glycine repeat-containing protein 10 (105 aa).

Residues 4-41 (CGCGGCGGRCSGGCGGGCGGGCGGGCGGGCGGCGGGCG) are 10 X 2 AA repeats of CG.

This sequence belongs to the KRTAP type 28 family.

Functionally, in the hair cortex, hair keratin intermediate filaments are embedded in an interfilamentous matrix, consisting of hair keratin-associated proteins (KRTAP), which are essential for the formation of a rigid and resistant hair shaft through their extensive disulfide bond cross-linking with abundant cysteine residues of hair keratins. The matrix proteins include the high-sulfur and high-glycine-tyrosine keratins. The sequence is that of Small cysteine and glycine repeat-containing protein 10 from Homo sapiens (Human).